Reading from the N-terminus, the 801-residue chain is Na(+)/H(+) antiporter subunit A1 (801 aa).

Transmembrane regions (helical) follow at residues 1–21 (MSLL…IPFL), 30–50 (LGWF…SLIS), 79–99 (LGLL…LYSI), 117–137 (LFMG…LYLF), 166–186 (LIIT…LSLA), 206–226 (PFFI…SAQV), 228–250 (FYIW…HSAT), 265–285 (IFAI…ITLF), 300–320 (ILAF…GIGA), 337–357 (FVAA…LFMI), 373–393 (LGGL…TTLS), 427–447 (LGIL…VYSI), 472–492 (ILML…GLFP), 522–542 (GITP…LLLI), 591–611 (LVII…SVPF), 623–643 (VFEG…IFAK), 646–666 (LFSI…FIFF), 671–691 (LALT…LCFY), 707–727 (LTNA…GLIG), and 764–784 (MDTL…YTMI).

This sequence belongs to the CPA3 antiporters (TC 2.A.63) subunit A family. In terms of assembly, may form a heterooligomeric complex that consists of seven subunits: mnhA1, mnhB1, mnhC1, mnhD1, mnhE1, mnhF1 and mnhG1.

It is found in the cell membrane. Functionally, mnh complex is a Na(+)/H(+) antiporter involved in Na(+) excretion. This chain is Na(+)/H(+) antiporter subunit A1 (mnhA1), found in Staphylococcus epidermidis (strain ATCC 35984 / DSM 28319 / BCRC 17069 / CCUG 31568 / BM 3577 / RP62A).